The chain runs to 104 residues: Interferon alpha-inducible protein 27-like protein 1 (104 aa).

Transmembrane regions (helical) follow at residues 14–34 (VAAVVGGVVAVGTVLVALSAM), 59–79 (GGGVAAGSLVAILQSVGAAGL), and 81–101 (VTSKVIGGFAGTALGAWLGSP).

Belongs to the IFI6/IFI27 family.

Its subcellular location is the membrane. Plays a role in the apoptotic process and has a pro-apoptotic activity. The chain is Interferon alpha-inducible protein 27-like protein 1 from Homo sapiens (Human).